A 233-amino-acid polypeptide reads, in one-letter code: Demethylmenaquinone methyltransferase (233 aa).

Residues threonine 58, aspartate 79, and 106-107 contribute to the S-adenosyl-L-methionine site; that span reads NA.

This sequence belongs to the class I-like SAM-binding methyltransferase superfamily. MenG/UbiE family.

The enzyme catalyses a 2-demethylmenaquinol + S-adenosyl-L-methionine = a menaquinol + S-adenosyl-L-homocysteine + H(+). It participates in quinol/quinone metabolism; menaquinone biosynthesis; menaquinol from 1,4-dihydroxy-2-naphthoate: step 2/2. Methyltransferase required for the conversion of demethylmenaquinol (DMKH2) to menaquinol (MKH2). The sequence is that of Demethylmenaquinone methyltransferase from Bacillus subtilis (strain 168).